A 668-amino-acid polypeptide reads, in one-letter code: Phosphatidylinositol 4-phosphate 5-kinase type-1 gamma (668 aa).

The interval 45 to 67 (SMTAQPGPGHGKKLGHRGVDASG) is disordered. One can recognise a PIPK domain in the interval 75–443 (TSSTLKGAIQ…RFFKFMSNTV (369 aa)). N6-acetyllysine occurs at positions 265 and 268. Arg-459 is subject to Asymmetric dimethylarginine; alternate. Arg-459 carries the omega-N-methylarginine; alternate modification. A compositionally biased stretch (low complexity) spans 526–535 (TTLSSTSLSI). 2 disordered regions span residues 526 to 578 (TTLS…ITVQ) and 593 to 642 (EDAG…YFPT). Ser-555 carries the phosphoserine modification. At Tyr-639 the chain carries Phosphotyrosine; by EGFR. The segment at 641-668 (PTDERSWVYSPLHYSAQAPPASDGESDT) is mediates interaction with TLN2. Residue Tyr-649 is modified to Phosphotyrosine; by CSK. Ser-650 carries the phosphoserine; by CDK5, MAPK1 and CDK1 modification. Residues Ser-662 and Ser-666 each carry the phosphoserine modification. Thr-668 carries the phosphothreonine modification.

In terms of assembly, interacts with TLN1. Interacts with TLN2; interaction stimulates 1-phosphatidylinositol-4-phosphate 5-kinase activity. May compete with beta-integrins for the same binding site on TLN1 and TLN2. Interacts with ARF6; interaction stimulates 1-phosphatidylinositol-4-phosphate 5-kinase activity. Interacts with AP2B1. Interacts with AP2M1; phosphorylation of PIP5K1C by CSK disrupts the interaction; clathrin competes with PIP5K1C. Interacts with CDH1. Interacts with CSK. Interacts with PLCG1; interaction is abolished upon EGF stimulation. Interacts with LAPTM4B; promotes SNX5 association with LAPTM4B; kinase activity of PIP5K1C is required; interaction is regulated by phosphatidylinositol 4,5-bisphosphate generated by PIP5K1C. In terms of processing, phosphorylation on Ser-650 negatively regulates binding to TLN2 and is strongly stimulated in mitosis. Phosphorylation on Tyr-649 is necessary for targeting to focal adhesions. Phosphorylation on Ser-650 and Tyr-649 are mutually exclusive. Phosphorylated by SYK and CSK. Tyrosine phosphorylation is enhanced by PTK2 signaling. Phosphorylated at Tyr-639 upon EGF stimulation. Some studies suggest that phosphorylation on Tyr-649 enhances binding to tailins (TLN1 and TLN2). According to PubMed:15738269 phosphorylation at Tyr-649 does not directly enhance binding to tailins (TLN1 and TLN2) but may act indirectly by inhibiting phosphorylation at Ser-650. Acetylation at Lys-265 and Lys-268 seems to decrease lipid 1-phosphatidylinositol-4-phosphate 5-kinase activity. Deacetylation of these sites by SIRT1 positively regulates the exocytosis of TSH-containing granules from pituitary cells. Isoform 1 is strongly expressed in brain and also detected in heart and lung. In terms of tissue distribution, isoform 2 is strongly expressed in pancreas and liver and in lesser quantities in brain, heart, lung and kidney. As to expression, isoform 3 is detected in large amounts in heart and large intestine, is also present in lung, pancreas and thyroid, and to a lesser extent in brain, stomach and kidney.

Its subcellular location is the cell membrane. It localises to the endomembrane system. The protein resides in the cytoplasm. The protein localises to the cell junction. It is found in the focal adhesion. Its subcellular location is the adherens junction. It localises to the cell projection. The protein resides in the ruffle membrane. The protein localises to the phagocytic cup. It is found in the uropodium. Its subcellular location is the nucleus. It catalyses the reaction a 1,2-diacyl-sn-glycero-3-phospho-(1D-myo-inositol 4-phosphate) + ATP = a 1,2-diacyl-sn-glycero-3-phospho-(1D-myo-inositol-4,5-bisphosphate) + ADP + H(+). The catalysed reaction is 1-octadecanoyl-2-(5Z,8Z,11Z,14Z)-eicosatetraenoyl-sn-glycero-3-phospho-1D-myo-inositol 4-phosphate + ATP = 1-octadecanoyl-2-(5Z,8Z,11Z,14Z)-eicosatetraenoyl-sn-glycero-3-phospho-1D-myo-inositol 4,5-bisphosphate + ADP + H(+). The enzyme catalyses 1-octadecanoyl-2-(9Z)-octadecenoyl-sn-glycero-3-phospho-1D-myo-inositol 4-phosphate + ATP = 1-octadecanoyl-2-(9Z)-octadecenoyl-sn-glycero-3-phospho-1D-myo-inositol 4,5-bisphosphate + ADP + H(+). It carries out the reaction 1-octadecanoyl-2-(9Z)-octadecenoyl-sn-glycero-3-phospho-1D-myo-inositol + ATP = 1-octadecanoyl-2-(9Z)-octadecenoyl-sn-glycero-3-phospho-1D-myo-inositol 5-phosphate + ADP + H(+). It catalyses the reaction 1-octadecanoyl-2-(9Z,12Z)-octadecadienoyl-sn-glycero-3-phospho-1D-myo-inositol + ATP = 1-octadecanoyl-2-(9Z,12Z)-octadecadienoyl-sn-glycero-3-phospho-1D-myo-inositol 5-phosphate + ADP + H(+). The catalysed reaction is 1-octadecanoyl-2-(5Z,8Z,11Z,14Z-eicosatetraenoyl)-sn-glycero-3-phospho-(1D-myo-inositol) + ATP = 1-octadecanoyl-2-(5Z,8Z,11Z,14Z)-eicosatetraenoyl-sn-glycero-3-phospho-1D-myo-inositol 5-phosphate + ADP + H(+). The enzyme catalyses 1,2-di-(9Z,12Z)-octadecadienoyl-sn-glycero-3-phospho-1D-myo-inositol + ATP = 1,2-di(9Z,12Z)-octadecadienoyl-sn-glycero-3-phospho-1D-myo-inositol 5-phosphate + ADP + H(+). Catalyzes the phosphorylation of phosphatidylinositol 4-phosphate (PtdIns(4)P/PI4P) to form phosphatidylinositol 4,5-bisphosphate (PtdIns(4,5)P2/PIP2), a lipid second messenger that regulates several cellular processes such as signal transduction, vesicle trafficking, actin cytoskeleton dynamics, cell adhesion, and cell motility. PtdIns(4,5)P2 can directly act as a second messenger or can be utilized as a precursor to generate other second messengers: inositol 1,4,5-trisphosphate (IP3), diacylglycerol (DAG) or phosphatidylinositol-3,4,5-trisphosphate (PtdIns(3,4,5)P3/PIP3). PIP5K1A-mediated phosphorylation of PtdIns(4)P is the predominant pathway for PtdIns(4,5)P2 synthesis. Together with PIP5K1A, is required for phagocytosis, both enzymes regulating different types of actin remodeling at sequential steps. Promotes particle attachment by generating the pool of PtdIns(4,5)P2 that induces controlled actin depolymerization to facilitate Fc-gamma-R clustering. Mediates RAC1-dependent reorganization of actin filaments. Required for synaptic vesicle transport. Controls the plasma membrane pool of PtdIns(4,5)P2 implicated in synaptic vesicle endocytosis and exocytosis. Plays a role in endocytosis mediated by clathrin and AP-2 (adaptor protein complex 2). Required for clathrin-coated pits assembly at the synapse. Participates in cell junction assembly. Modulates adherens junctions formation by facilitating CDH1/cadherin trafficking. Required for focal adhesion dynamics. Modulates the targeting of talins (TLN1 and TLN2) to the plasma membrane and their efficient assembly into focal adhesions. Regulates the interaction between talins (TLN1 and TLN2) and beta-integrins. Required for uropodium formation and retraction of the cell rear during directed migration. Has a role in growth factor-stimulated directional cell migration and adhesion. Required for talin assembly into nascent adhesions forming at the leading edge toward the direction of the growth factor. Negative regulator of T-cell activation and adhesion. Negatively regulates integrin alpha-L/beta-2 (LFA-1) polarization and adhesion induced by T-cell receptor. Together with PIP5K1A has a role during embryogenesis and together with PIP5K1B may have a role immediately after birth. This is Phosphatidylinositol 4-phosphate 5-kinase type-1 gamma from Homo sapiens (Human).